Here is a 255-residue protein sequence, read N- to C-terminus: MLRKRVEIGPVESGLWNAVETDGAAHLTLIDPASQDPERAVQMARSAADAGTTALMVGGSVGATGSALDRTVRAIKDSVDLPVILFPSSAAGLCDNADAVFFMSLLNSRSTSYLIENQALGAPIVSRYGIEAIPMGYIVVEPGGTVGWVGDAKLVPRRKPDIAAAYALAGRYLGMRLIYLEAGSGAESPVPTSMVSAVRDAIGDTLLVVGGGIRDAEAARKLVSAGADLIVTGTGVEESGDVFRFVKDIVTAIHV.

Asp-31 and Ser-60 together coordinate Mg(2+). Sn-glycerol 1-phosphate is bound by residues 179 to 185 (YLEAGSG), 211 to 212 (GG), and 233 to 234 (GT).

It belongs to the GGGP/HepGP synthase family. Group II subfamily. Requires Mg(2+) as cofactor.

Its subcellular location is the cytoplasm. It catalyses the reaction sn-glycerol 1-phosphate + (2E,6E,10E)-geranylgeranyl diphosphate = sn-3-O-(geranylgeranyl)glycerol 1-phosphate + diphosphate. It functions in the pathway membrane lipid metabolism; glycerophospholipid metabolism. In terms of biological role, prenyltransferase that catalyzes the transfer of the geranylgeranyl moiety of geranylgeranyl diphosphate (GGPP) to the C3 hydroxyl of sn-glycerol-1-phosphate (G1P). This reaction is the first ether-bond-formation step in the biosynthesis of archaeal membrane lipids. The polypeptide is Geranylgeranylglyceryl phosphate synthase (Methanothrix thermoacetophila (strain DSM 6194 / JCM 14653 / NBRC 101360 / PT) (Methanosaeta thermophila)).